The primary structure comprises 257 residues: Phosphonates import ATP-binding protein PhnC (257 aa).

The region spanning 7–251 (IQLKDVSKIY…VFTDIYNGGD (245 aa)) is the ABC transporter domain. 40–47 (GLSGAGKS) is a binding site for ATP.

The protein belongs to the ABC transporter superfamily. Phosphonates importer (TC 3.A.1.9.1) family. The complex is composed of two ATP-binding proteins (PhnC), two transmembrane proteins (PhnE) and a solute-binding protein (PhnD).

It is found in the cell membrane. The catalysed reaction is phosphonate(out) + ATP + H2O = phosphonate(in) + ADP + phosphate + H(+). Its function is as follows. Part of the ABC transporter complex PhnCDE involved in phosphonates import. Responsible for energy coupling to the transport system. The polypeptide is Phosphonates import ATP-binding protein PhnC (Lactobacillus acidophilus (strain ATCC 700396 / NCK56 / N2 / NCFM)).